We begin with the raw amino-acid sequence, 304 residues long: uncharacterized protein (304 aa).

The first 15 residues, 1 to 15 (MTRPRPPLGPAMAGA), serve as a signal peptide directing secretion. Residues 28-151 (NAAASTDADR…LSRWVDSLLS (124 aa)) form the Thioredoxin domain.

This is an uncharacterized protein from Mycobacterium bovis (strain ATCC BAA-935 / AF2122/97).